Here is a 719-residue protein sequence, read N- to C-terminus: Capsid protein (719 aa).

A disordered region spans residues 647–678 (GDALPSRERKRQAWQDSTSEETESEAEAQEEK). A compositionally biased stretch (acidic residues) spans 664–674 (TSEETESEAEA).

It belongs to the anelloviridae capsid protein family.

Its subcellular location is the virion. Self assemble to form an icosahedral capsid. The chain is Capsid protein from Torque teno virus (isolate Human/Germany/KAV/2001) (TTV).